Consider the following 165-residue polypeptide: Xanthine-guanine phosphoribosyltransferase (165 aa).

5-phospho-alpha-D-ribose 1-diphosphate is bound by residues 41-42 (RG) and 98-106 (DDLTDTGKT). Asp99 lines the Mg(2+) pocket. The guanine site is built by Asp102 and Ile145. Asp102 and Ile145 together coordinate xanthine. GMP is bound by residues 102 to 106 (DTGKT) and 144 to 145 (WI).

Belongs to the purine/pyrimidine phosphoribosyltransferase family. XGPT subfamily. Homotetramer. Mg(2+) is required as a cofactor.

Its subcellular location is the cell inner membrane. It carries out the reaction GMP + diphosphate = guanine + 5-phospho-alpha-D-ribose 1-diphosphate. The catalysed reaction is XMP + diphosphate = xanthine + 5-phospho-alpha-D-ribose 1-diphosphate. It catalyses the reaction IMP + diphosphate = hypoxanthine + 5-phospho-alpha-D-ribose 1-diphosphate. It functions in the pathway purine metabolism; GMP biosynthesis via salvage pathway; GMP from guanine: step 1/1. The protein operates within purine metabolism; XMP biosynthesis via salvage pathway; XMP from xanthine: step 1/1. Purine salvage pathway enzyme that catalyzes the transfer of the ribosyl-5-phosphate group from 5-phospho-alpha-D-ribose 1-diphosphate (PRPP) to the N9 position of the 6-oxopurines guanine and xanthine to form the corresponding ribonucleotides GMP (guanosine 5'-monophosphate) and XMP (xanthosine 5'-monophosphate), with the release of PPi. To a lesser extent, also acts on hypoxanthine. The sequence is that of Xanthine-guanine phosphoribosyltransferase from Chelativorans sp. (strain BNC1).